A 410-amino-acid polypeptide reads, in one-letter code: Magnesium transporter NIPA3 (410 aa).

Over 1–67 (MGAQVRLPPG…ISANVENKYS (67 aa)) the chain is Extracellular. 3 N-linked (GlcNAc...) asparagine glycosylation sites follow: asparagine 25, asparagine 35, and asparagine 50. Residues 68-88 (LYVGLVLAVSSSIFIGSSFIL) form a helical membrane-spanning segment. The Cytoplasmic portion of the chain corresponds to 89 to 114 (KKKGLLQLASKGITRAGQGGHSYLKE). A helical membrane pass occupies residues 115–135 (WLWWVGLLSMGVGEAANFAAY). Residue alanine 136 is a topological domain, extracellular. A helical transmembrane segment spans residues 137 to 157 (FAPATLVTPLGALSVLISAIL). The Cytoplasmic segment spans residues 158-165 (SSYFLNEH). Residues 166-186 (LNIHGKIGCILSILGSTVMVI) traverse the membrane as a helical segment. Residues 187–207 (HAPQEEEVTSLHEMEMKLRDP) are Extracellular-facing. A helical transmembrane segment spans residues 208–228 (GFISFAVIVTVISLVLILIVA). Residues 229 to 233 (PKKGQ) lie on the Cytoplasmic side of the membrane. A helical membrane pass occupies residues 234–254 (TNILVYISICSLIGAFSVSSV). The Extracellular segment spans residues 255 to 273 (KGLGIAIKELIEWKPVYKH). The helical transmembrane segment at 274 to 294 (PLVFVLLAVLVLSVTTQINYL) threads the bilayer. At 295-304 (NKALDTFNTS) the chain is on the cytoplasmic side. Residues 305–325 (IVTPIYYVFFTSMVVTCSAIL) traverse the membrane as a helical segment. Topologically, residues 326–336 (FQEWYGMTAGD) are extracellular. Residues 337 to 357 (IIGTLSGFFTIIIGIFLLHAF) form a helical membrane-spanning segment. Residues 358–410 (KNTDITWSELTSTAKKEAVSLNVSENNYVLLENLECSAPGYNDDVTLFSRTDD) are Cytoplasmic-facing.

Belongs to the NIPA family.

It localises to the golgi apparatus membrane. It catalyses the reaction Mg(2+)(in) = Mg(2+)(out). Functionally, acts as a Mg(2+) transporter. Can also transport other divalent cations such as Fe(2+), Sr(2+), Ba(2+), Mn(2+), Cu(2+) and Co(2+) but to a much less extent than Mg(2+). The protein is Magnesium transporter NIPA3 (NIPAL1) of Pongo abelii (Sumatran orangutan).